Reading from the N-terminus, the 354-residue chain is MAKQAIKRAKILAVKNNNKIGVLLINLGTPDEPSVPAVRRYLRQFLSDPKVIDVPSLVRWIIVHLCILPFRPKRSAKLYQKIWMPEGSPLLVYSEMLRERVGETLGDDFCVALGMRYGKPSIETALKKLQEAQCRQLIVLPLFPQYSTSTTASALEEVRAKNSFKEMTVIDRFFEEPHYIDSMTTLIHENLNEFQPDYFLFSYHGLPERHLVKSGCQLAICNRKNNCSPISSSNENCYRAQCFETSRLIAKKLNLTDQQYGVAFQSRLGRAKWIEPYTDKYLIELSKKGIKKLMVVCPSFPVDCLETLEEIGIRAQSQWQRLDGETLKLIPSLNAHPQWVNAIAKMAKKSLQLF.

Positions 204 and 306 each coordinate Fe cation.

The protein belongs to the ferrochelatase family.

It is found in the cytoplasm. It carries out the reaction heme b + 2 H(+) = protoporphyrin IX + Fe(2+). Its pathway is porphyrin-containing compound metabolism; protoheme biosynthesis; protoheme from protoporphyrin-IX: step 1/1. Catalyzes the ferrous insertion into protoporphyrin IX. This is Ferrochelatase from Coxiella burnetii (strain RSA 493 / Nine Mile phase I).